Reading from the N-terminus, the 168-residue chain is Cell division inhibitor SulA (168 aa).

The interval 106-112 (ALLTGNY) is ftsZ binding. The tract at residues 161 to 168 (KIHSSLYH) is lon protease binding.

The protein belongs to the SulA family. In terms of assembly, interacts with FtsZ. Is rapidly cleaved and degraded by the Lon protease once DNA damage is repaired.

Its function is as follows. Component of the SOS system and an inhibitor of cell division. Accumulation of SulA causes rapid cessation of cell division and the appearance of long, non-septate filaments. In the presence of GTP, binds a polymerization-competent form of FtsZ in a 1:1 ratio, thus inhibiting FtsZ polymerization and therefore preventing it from participating in the assembly of the Z ring. This mechanism prevents the premature segregation of damaged DNA to daughter cells during cell division. The sequence is that of Cell division inhibitor SulA from Yersinia enterocolitica serotype O:8 / biotype 1B (strain NCTC 13174 / 8081).